Consider the following 524-residue polypeptide: MLKDIHQHRILILDFGSQYAQLIARRVREIGVYCELMPCDIDEETIRDFNPHGIILSGGPETVTLSHTLRAPAFIFEIGCPVLGICYGMQTMAYQLGGKVNRTAKAEFGHAQLRVLNPAFLFDGIEDQVSPQGEPLLDVWMSHGDIVSELPPGFEATACTDNSPLAAMADFKRRFFGLQFHPEVTHTPQGDRILAHFVIHICQCIPNWTTKHIIEDSIRDIQEKVGKEQVIVGLSGGVDSAVTATLVHKAIGDQLVCVLVDTGLLRLNEVDEVLNVFQKHLGAKVICVDAKDRFMKALKGISDPEEKRKIAGEQFIRVFEEQAKKLNVKWLGQGTIYPDVIESAKTKTGKVHIIKTHHNVGGLPLNMELKLIEPLRELFKDEVRKLGLELGLPADLIYRHPFPGPGLAIRILGEVSAEYINILKQADAIFIEELKKSDYYHQVSQAFAVFMPLKSVGVKGDARHYGYIIALRAVKTVDFMTAQWADLPHEFLSKVSHRIVNEIKEVSRVVYDMTNKPPATIEWE.

Residues 9 to 207 (RILILDFGSQ…VIHICQCIPN (199 aa)) form the Glutamine amidotransferase type-1 domain. The Nucleophile role is filled by cysteine 86. Residues histidine 181 and glutamate 183 contribute to the active site. The 192-residue stretch at 208-399 (WTTKHIIEDS…LGLPADLIYR (192 aa)) folds into the GMPS ATP-PPase domain. 235–241 (SGGVDSA) is an ATP binding site.

In terms of assembly, homodimer.

It catalyses the reaction XMP + L-glutamine + ATP + H2O = GMP + L-glutamate + AMP + diphosphate + 2 H(+). Its pathway is purine metabolism; GMP biosynthesis; GMP from XMP (L-Gln route): step 1/1. Functionally, catalyzes the synthesis of GMP from XMP. The chain is GMP synthase [glutamine-hydrolyzing] from Coxiella burnetii (strain RSA 331 / Henzerling II).